A 136-amino-acid chain; its full sequence is Histone H3.3 (136 aa).

The disordered stretch occupies residues 1-42; that stretch reads MARTKQTARKSTGGKAPRKQLASKAARKSAPVSGGVKKPHRY. The residue at position 5 (K5) is an N6,N6,N6-trimethyllysine; alternate. An N6,N6-dimethyllysine; alternate modification is found at K5. 2 positions are modified to N6-methyllysine; alternate: K5 and K10. K10 carries the N6-acetyllysine; alternate modification. A Phosphoserine modification is found at S11. K15 is modified (N6,N6-dimethyllysine; alternate). K15, K19, K24, K28, and K37 each carry N6-acetyllysine; alternate. Residues K19, K24, K28, and K37 each carry the N6-methyllysine; alternate modification. Residues K28 and K37 each carry the N6,N6,N6-trimethyllysine; alternate modification. N6,N6-dimethyllysine; alternate is present on residues K28 and K37. An N6-acetyllysine mark is found at K57 and K65. Position 80 is an N6,N6,N6-trimethyllysine; alternate (K80). At K80 the chain carries N6,N6-dimethyllysine; alternate. Position 80 is an N6-methyllysine; alternate (K80).

The protein belongs to the histone H3 family. In terms of assembly, the nucleosome is a histone octamer containing two molecules each of H2A, H2B, H3 and H4 assembled in one H3-H4 heterotetramer and two H2A-H2B heterodimers. The octamer wraps approximately 147 bp of DNA. Phosphorylated by IPL1 to form H3S10ph. H3S10ph promotes subsequent H3K14ac formation by GCN5 and is required for transcriptional activation through TBP recruitment to the promoters. In terms of processing, mono-, di- and trimethylated by the COMPASS complex to form H3K4me1/2/3. H3K4me activates gene expression by regulating transcription elongation and plays a role in telomere length maintenance. H3K4me enrichment correlates with transcription levels, and occurs in a 5' to 3' gradient with H3K4me3 enrichment at the 5'-end of genes, shifting to H3K4me2 and then H3K4me1. Methylated by SET2 to form H3K36me. H3K36me represses gene expression. Methylated by DOT1 to form H3K79me. H3K79me is required for association of SIR proteins with telomeric regions and for telomeric silencing. The COMPASS-mediated formation of H3K4me2/3 and the DOT1-mediated formation of H3K79me require H2BK123ub1. Post-translationally, acetylation of histone H3 leads to transcriptional activation. H3K14ac formation by GCN5 is promoted by H3S10ph. H3K14ac can also be formed by ESA1. H3K56ac formation occurs predominantly in newly synthesized H3 molecules during G1, S and G2/M of the cell cycle and may be involved in DNA repair.

It localises to the nucleus. The protein localises to the chromosome. In terms of biological role, core component of nucleosome. Nucleosomes wrap and compact DNA into chromatin, limiting DNA accessibility to the cellular machineries which require DNA as a template. Histones thereby play a central role in transcription regulation, DNA repair, DNA replication and chromosomal stability. DNA accessibility is regulated via a complex set of post-translational modifications of histones, also called histone code, and nucleosome remodeling. In Debaryomyces hansenii (strain ATCC 36239 / CBS 767 / BCRC 21394 / JCM 1990 / NBRC 0083 / IGC 2968) (Yeast), this protein is Histone H3.3 (HHT3).